A 392-amino-acid chain; its full sequence is MKASVIIPAYNSKERLYNSLLSLNQQECDEEFEVIVADNGSEDGTLSMLESFQADFPLIFTRIKENRGIAYGRNQALRNARGDILIFHDSDMLAAKDLVAKHIKAHENEENLVVCGLFWKRIYSFYYERFEEEHKEQLAKLTGEMPKKDKQKLLEEADIKNGSFLDKSFDLDTDFIDVLKKILDEYGDDLKGYHMPWRFFITNNSSVKRKHVVDLGLFDEGIVRYGFEDYDLGIRLHQAGLTFRLRRDIVSVHQEHPSNCKSVDDIRANIAYMCDKYNNIRSLDVHLAFNGPFPPDMTNRIMADIQKLLESQKYDMLLNLFLELLHVVKERNIDPDWRKKSPRVTAKSFDLQTVRKLLPKAKKKLGVNDFANALYALVNDLLHVDLRSLDVV.

This sequence belongs to the glycosyltransferase 2 family.

This is an uncharacterized protein from Bacillus subtilis (strain 168).